Here is a 436-residue protein sequence, read N- to C-terminus: Transcriptional regulator STP3 (436 aa).

The tract at residues 204–277 (EPLDDEFVPP…TKRKYTKKKQ (74 aa)) is disordered. A compositionally biased stretch (low complexity) spans 230–265 (ISPPASSDSSSSSSYVPQLIPSSSSSVTSNGDSPVS). Over residues 268 to 277 (TKRKYTKKKQ) the composition is skewed to basic residues. The C2H2-type zinc finger occupies 315–337 (FDCPSCDASFKVKGYLTRHLKKH).

Activated by the amino acid-induced proteolytic removal of an N-terminal inhibitory domain.

It is found in the cell membrane. It localises to the nucleus. Transcription factor that activates genes required for degradation of extracellular protein and uptake of peptides such as the secreted aspartyl protease SAP2 or the oligopeptide transporter OPT1. Required for virulence. Synthesized as latent cytoplasmic precursor, which, upon a signal initiated by the plasma membrane SPS amino acid sensor system (including CSY1 and CSH3), becomes proteolytically activated and relocates to the nucleus, where it induces the expression of SPS-sensor-regulated genes. In Candida albicans (strain SC5314 / ATCC MYA-2876) (Yeast), this protein is Transcriptional regulator STP3 (STP3).